A 499-amino-acid polypeptide reads, in one-letter code: Glycerol kinase (499 aa).

T13 contacts ADP. The ATP site is built by T13, T14, and S15. A sn-glycerol 3-phosphate-binding site is contributed by T13. R17 contributes to the ADP binding site. 4 residues coordinate sn-glycerol 3-phosphate: R83, E84, Y136, and D246. Glycerol-binding residues include R83, E84, Y136, D246, and Q247. Residues T268 and G311 each contribute to the ADP site. T268, G311, Q315, and G412 together coordinate ATP. Residues G412 and N416 each coordinate ADP.

Belongs to the FGGY kinase family.

The enzyme catalyses glycerol + ATP = sn-glycerol 3-phosphate + ADP + H(+). Its pathway is polyol metabolism; glycerol degradation via glycerol kinase pathway; sn-glycerol 3-phosphate from glycerol: step 1/1. Inhibited by fructose 1,6-bisphosphate (FBP). In terms of biological role, key enzyme in the regulation of glycerol uptake and metabolism. Catalyzes the phosphorylation of glycerol to yield sn-glycerol 3-phosphate. The protein is Glycerol kinase of Francisella philomiragia subsp. philomiragia (strain ATCC 25017 / CCUG 19701 / FSC 153 / O#319-036).